A 169-amino-acid chain; its full sequence is Photosystem I assembly protein Ycf3 (169 aa).

3 TPR repeats span residues 35 to 68 (AFTY…EIDP), 72 to 105 (SYIL…NPSL), and 120 to 153 (GEQA…APGN).

It belongs to the Ycf3 family.

The protein resides in the plastid. It is found in the chloroplast thylakoid membrane. In terms of biological role, essential for the assembly of the photosystem I (PSI) complex. May act as a chaperone-like factor to guide the assembly of the PSI subunits. This Huperzia lucidula (Shining clubmoss) protein is Photosystem I assembly protein Ycf3.